The chain runs to 430 residues: ATP-dependent RNA helicase RhlB (430 aa).

Positions 9 to 37 (QKFSDFALHPQVIEALESKGFHNCTPIQA) match the Q motif motif. The Helicase ATP-binding domain maps to 40 to 219 (LPLALSGRDV…FEQMNNAEYV (180 aa)). An ATP-binding site is contributed by 53-60 (AQTGTGKT). The DEAD box signature appears at 165–168 (DEAD). The 146-residue stretch at 245–390 (RLLQTLLEEE…VSKYNSDALM (146 aa)) folds into the Helicase C-terminal domain. Residues 392–430 (DLPAPKRLTRPPRSNNGPRRHNNAPRRSGAPRNNRKRAD) are disordered.

It belongs to the DEAD box helicase family. RhlB subfamily. In terms of assembly, component of the RNA degradosome, which is a multiprotein complex involved in RNA processing and mRNA degradation.

The protein resides in the cytoplasm. The catalysed reaction is ATP + H2O = ADP + phosphate + H(+). Functionally, DEAD-box RNA helicase involved in RNA degradation. Has RNA-dependent ATPase activity and unwinds double-stranded RNA. This Pectobacterium carotovorum subsp. carotovorum (strain PC1) protein is ATP-dependent RNA helicase RhlB.